A 132-amino-acid chain; its full sequence is Fluoride-specific ion channel FluC (132 aa).

Transmembrane regions (helical) follow at residues 6-26 (VLQLIAVGFGGALGAMARFIV), 41-61 (GTLVVNSLGSFAIGLIMILMI), 73-93 (FLIVGFLGAFTTFSTFSFETY), and 104-124 (AMLNIGVSVLTGLFAVWLGIW). 2 residues coordinate Na(+): Gly-80 and Thr-83.

Belongs to the fluoride channel Fluc/FEX (TC 1.A.43) family.

The protein resides in the cell inner membrane. It catalyses the reaction fluoride(in) = fluoride(out). With respect to regulation, na(+) is not transported, but it plays an essential structural role and its presence is essential for fluoride channel function. Functionally, fluoride-specific ion channel. Important for reducing fluoride concentration in the cell, thus reducing its toxicity. The protein is Fluoride-specific ion channel FluC of Hydrogenovibrio crunogenus (strain DSM 25203 / XCL-2) (Thiomicrospira crunogena).